We begin with the raw amino-acid sequence, 137 residues long: ATP synthase epsilon chain (137 aa).

It belongs to the ATPase epsilon chain family. In terms of assembly, F-type ATPases have 2 components, CF(1) - the catalytic core - and CF(0) - the membrane proton channel. CF(1) has five subunits: alpha(3), beta(3), gamma(1), delta(1), epsilon(1). CF(0) has three main subunits: a, b and c.

It is found in the cell inner membrane. Functionally, produces ATP from ADP in the presence of a proton gradient across the membrane. This is ATP synthase epsilon chain from Yersinia pestis bv. Antiqua (strain Antiqua).